A 177-amino-acid chain; its full sequence is Large ribosomal subunit protein uL6 (177 aa).

The interval 151–177 (LRPPEPYKGKGVRYAGENVRRKEGKKK) is disordered.

The protein belongs to the universal ribosomal protein uL6 family. As to quaternary structure, part of the 50S ribosomal subunit.

This protein binds to the 23S rRNA, and is important in its secondary structure. It is located near the subunit interface in the base of the L7/L12 stalk, and near the tRNA binding site of the peptidyltransferase center. The polypeptide is Large ribosomal subunit protein uL6 (Phenylobacterium zucineum (strain HLK1)).